The primary structure comprises 150 residues: Large ribosomal subunit protein bL9 (150 aa).

Belongs to the bacterial ribosomal protein bL9 family.

In terms of biological role, binds to the 23S rRNA. The polypeptide is Large ribosomal subunit protein bL9 (Limosilactobacillus fermentum (strain NBRC 3956 / LMG 18251) (Lactobacillus fermentum)).